The sequence spans 389 residues: Large envelope protein (389 aa).

N-acetylmethionine is present on Met-1. Gly-2 carries N-myristoyl glycine; by host lipidation. Positions 2-108 are pre-S1; it reads GTNLSVPNPL…PPLRDSHPQA (107 aa). The segment at 2-163 is pre-S; that stretch reads GTNLSVPNPL…SSRTGDPALN (162 aa). The Virion surface; in external conformation segment spans residues 2-170; that stretch reads GTNLSVPNPL…ALNMENITSG (169 aa). Over 2–242 the chain is Intravirion; in internal conformation; the sequence is GTNLSVPNPL…PGYRWMCLRR (241 aa). The segment at 79-103 is disordered; the sequence is TVPPTASTNRQSGRQPTPISPPLRD. The span at 84–95 shows a compositional bias: polar residues; the sequence is ASTNRQSGRQPT. Residues 109–163 form a pre-S2 region; it reads MQWNSTALHQALQDPRVRGLYFPAGGSSSGTLNPVPNTASHISSISSRTGDPALN. Residues 171 to 191 form a helical membrane-spanning segment; that stretch reads FLGPLLVLQAGFFLLTRILTI. Residues 192–242 lie on the Intravirion; in external conformation side of the membrane; the sequence is PQSLDSWWTSLNFLGGSPVCLGQNSQYPTSNHSPTSCPPICPGYRWMCLRR. A helical transmembrane segment spans residues 243–263; sequence FIIFLFILLLCLIFLLVLLDY. Residues 264 to 337 lie on the Virion surface side of the membrane; the sequence is QGMLPVCPLI…WASVRFSWLS (74 aa). An N-linked (GlcNAc...) asparagine; by host glycan is attached at Asn-309. Residues 338–358 traverse the membrane as a helical segment; that stretch reads LLVPFVQWFVGLSPTVWLSVI. The Intravirion portion of the chain corresponds to 359–364; sequence WMMWYW. The helical transmembrane segment at 365–387 threads the bilayer; sequence GPSLYNIVSPFIPLLPIFFCLWV. Topologically, residues 388 to 389 are virion surface; that stretch reads YI.

This sequence belongs to the orthohepadnavirus major surface antigen family. As to quaternary structure, in its internal form (Li-HBsAg), interacts with the capsid protein and with the isoform S. Interacts with host chaperone CANX. In terms of assembly, associates with host chaperone CANX through its pre-S2 N glycan; this association may be essential for isoform M proper secretion. Interacts with isoform L. Interacts with the antigens of satellite virus HDV (HDVAgs); this interaction is required for encapsidation of HDV genomic RNA. Isoform M is N-terminally acetylated by host at a ratio of 90%, and N-glycosylated by host at the pre-S2 region. In terms of processing, myristoylated.

The protein resides in the virion membrane. The large envelope protein exists in two topological conformations, one which is termed 'external' or Le-HBsAg and the other 'internal' or Li-HBsAg. In its external conformation the protein attaches the virus to cell receptors and thereby initiating infection. This interaction determines the species specificity and liver tropism. This attachment induces virion internalization predominantly through caveolin-mediated endocytosis. The large envelope protein also assures fusion between virion membrane and endosomal membrane. In its internal conformation the protein plays a role in virion morphogenesis and mediates the contact with the nucleocapsid like a matrix protein. Its function is as follows. The middle envelope protein plays an important role in the budding of the virion. It is involved in the induction of budding in a nucleocapsid independent way. In this process the majority of envelope proteins bud to form subviral lipoprotein particles of 22 nm of diameter that do not contain a nucleocapsid. This is Large envelope protein from Hepatitis B virus genotype A1 subtype adw2 (isolate South Africa/84/2001) (HBV-A).